The chain runs to 240 residues: 4-hydroxy-tetrahydrodipicolinate reductase (240 aa).

NAD(+)-binding positions include 79 to 81 (ATT) and 103 to 106 (SANM). Residue histidine 135 is the Proton donor/acceptor of the active site. Residue histidine 136 participates in (S)-2,3,4,5-tetrahydrodipicolinate binding. The Proton donor role is filled by lysine 139. Residue 145–146 (GT) participates in (S)-2,3,4,5-tetrahydrodipicolinate binding.

The protein belongs to the DapB family.

It is found in the cytoplasm. The enzyme catalyses (S)-2,3,4,5-tetrahydrodipicolinate + NAD(+) + H2O = (2S,4S)-4-hydroxy-2,3,4,5-tetrahydrodipicolinate + NADH + H(+). It carries out the reaction (S)-2,3,4,5-tetrahydrodipicolinate + NADP(+) + H2O = (2S,4S)-4-hydroxy-2,3,4,5-tetrahydrodipicolinate + NADPH + H(+). Its pathway is amino-acid biosynthesis; L-lysine biosynthesis via DAP pathway; (S)-tetrahydrodipicolinate from L-aspartate: step 4/4. Its function is as follows. Catalyzes the conversion of 4-hydroxy-tetrahydrodipicolinate (HTPA) to tetrahydrodipicolinate. This Staphylococcus epidermidis (strain ATCC 12228 / FDA PCI 1200) protein is 4-hydroxy-tetrahydrodipicolinate reductase.